The sequence spans 536 residues: Inactive beta-amylase 9 (536 aa).

Phosphoserine is present on S47. The interval Q511 to A536 is disordered.

This sequence belongs to the glycosyl hydrolase 14 family. In terms of tissue distribution, mostly expressed in young floral buds, flowers and roots, and, to a later extent, in stems and leaves.

It is found in the cytoplasm. The sequence is that of Inactive beta-amylase 9 (BAM9) from Arabidopsis thaliana (Mouse-ear cress).